The primary structure comprises 150 residues: uncharacterized protein (150 aa).

The disordered stretch occupies residues 49–88; sequence KEWAENASTDEIDDFLTHDDETERDADPSSGSGPELMNKA. Residues 63–75 show a composition bias toward basic and acidic residues; sequence FLTHDDETERDAD.

This is an uncharacterized protein from Bacillus subtilis (strain 168).